A 360-amino-acid polypeptide reads, in one-letter code: A-type ATP synthase subunit C (360 aa).

This sequence belongs to the V-ATPase V0D/AC39 subunit family. Has multiple subunits, A(3), B(3), C, D, E, F, G, I and K(x); there may be a few other subunits as well.

The protein resides in the cell membrane. Functionally, component of the A-type ATP synthase that produces ATP from ADP in the presence of a proton gradient across the membrane. This is A-type ATP synthase subunit C from Methanosarcina mazei (strain ATCC BAA-159 / DSM 3647 / Goe1 / Go1 / JCM 11833 / OCM 88) (Methanosarcina frisia).